Here is a 267-residue protein sequence, read N- to C-terminus: Deoxyribose-phosphate aldolase (267 aa).

The active-site Proton donor/acceptor is Asp-123. Lys-185 acts as the Schiff-base intermediate with acetaldehyde in catalysis. Lys-217 serves as the catalytic Proton donor/acceptor.

It belongs to the DeoC/FbaB aldolase family. DeoC type 1 subfamily.

It is found in the cytoplasm. It carries out the reaction 2-deoxy-D-ribose 5-phosphate = D-glyceraldehyde 3-phosphate + acetaldehyde. Its pathway is carbohydrate degradation; 2-deoxy-D-ribose 1-phosphate degradation; D-glyceraldehyde 3-phosphate and acetaldehyde from 2-deoxy-alpha-D-ribose 1-phosphate: step 2/2. Functionally, catalyzes a reversible aldol reaction between acetaldehyde and D-glyceraldehyde 3-phosphate to generate 2-deoxy-D-ribose 5-phosphate. In Coccidioides immitis (strain RS) (Valley fever fungus), this protein is Deoxyribose-phosphate aldolase.